Consider the following 181-residue polypeptide: Regulator of G-protein signaling 5 (181 aa).

In terms of domain architecture, RGS spans 64 to 180; it reads SLDKLLQNNY…VRSEFYQEFI (117 aa).

The protein localises to the cytoplasm. It localises to the membrane. Inhibits signal transduction by increasing the GTPase activity of G protein alpha subunits thereby driving them into their inactive GDP-bound form. Binds to G(i)-alpha and G(o)-alpha, but not to G(s)-alpha. In Bos taurus (Bovine), this protein is Regulator of G-protein signaling 5 (RGS5).